The primary structure comprises 556 residues: Formate--tetrahydrofolate ligase (556 aa).

Residue 65 to 72 (TPAGEGKS) participates in ATP binding.

The protein belongs to the formate--tetrahydrofolate ligase family.

It carries out the reaction (6S)-5,6,7,8-tetrahydrofolate + formate + ATP = (6R)-10-formyltetrahydrofolate + ADP + phosphate. It functions in the pathway one-carbon metabolism; tetrahydrofolate interconversion. The protein is Formate--tetrahydrofolate ligase of Streptococcus mutans serotype c (strain ATCC 700610 / UA159).